A 576-amino-acid polypeptide reads, in one-letter code: Arginine--tRNA ligase (576 aa).

Residues 122–132 (PNVAKEMHVGH) carry the 'HIGH' region motif.

It belongs to the class-I aminoacyl-tRNA synthetase family. In terms of assembly, monomer.

Its subcellular location is the cytoplasm. It carries out the reaction tRNA(Arg) + L-arginine + ATP = L-arginyl-tRNA(Arg) + AMP + diphosphate. The protein is Arginine--tRNA ligase of Photobacterium profundum (strain SS9).